The chain runs to 332 residues: MSRFGPFPDPSALLDHDEAAHAFATMLDGGARDEQIAAFLVALADRGETMVEIAAAAQAMRDRLIPIEAPAGAIDVCGTGGDGHHTLNVSTAVSIVVAACDVPVAKHGNRAASSKSGAADTLEALGLDMERADRQAQEQLADLGICFLFAGTRHPAMKRIMPIRKAIGRRTIFNLMGPLANPARVTRQLVGIARPAYVPVYAEALHRLGTDHSRVISGDEGLDELSLAGGNEVAVVTPDGVRMQRSSAADAGLPTRSLAEIRGGDAAFNARALRRLLEGETGAYRDAVLYNAAAALIVAGAVDTLTEGVEEAAEAIDKGLANALLNCWIAYK.

Residues Gly-78, 81–82, Thr-86, 88–91, 106–114, and Ala-118 each bind 5-phospho-alpha-D-ribose 1-diphosphate; these read GD, NVST, and KHGNRAASS. Gly-78 is a binding site for anthranilate. Ser-90 contributes to the Mg(2+) binding site. Asn-109 provides a ligand contact to anthranilate. Anthranilate is bound at residue Arg-164. Residues Asp-223 and Glu-224 each contribute to the Mg(2+) site.

The protein belongs to the anthranilate phosphoribosyltransferase family. As to quaternary structure, homodimer. Mg(2+) is required as a cofactor.

The enzyme catalyses N-(5-phospho-beta-D-ribosyl)anthranilate + diphosphate = 5-phospho-alpha-D-ribose 1-diphosphate + anthranilate. Its pathway is amino-acid biosynthesis; L-tryptophan biosynthesis; L-tryptophan from chorismate: step 2/5. Its function is as follows. Catalyzes the transfer of the phosphoribosyl group of 5-phosphorylribose-1-pyrophosphate (PRPP) to anthranilate to yield N-(5'-phosphoribosyl)-anthranilate (PRA). The sequence is that of Anthranilate phosphoribosyltransferase from Sphingopyxis alaskensis (strain DSM 13593 / LMG 18877 / RB2256) (Sphingomonas alaskensis).